Here is a 308-residue protein sequence, read N- to C-terminus: Putative mitochondrial transporter UCP3 (308 aa).

The Mitochondrial intermembrane segment spans residues 1 to 10 (MVGLQPSEVP). The chain crosses the membrane as a helical span at residues 11 to 32 (PTTVVKFLGAGTAACFADLLTF). 3 Solcar repeats span residues 11–102 (PTTV…VKQF), 111–202 (SSVA…IKEK), and 211–296 (DNFP…LKRA). Over 33–73 (PLDTAKVRLQIQGENPGAQSVQYRGVLGTILTMVRTEGPRS) the chain is Mitochondrial matrix. A helical membrane pass occupies residues 74 to 96 (PYSGLVAGLHRQMSFASIRIGLY). At 97 to 116 (DSVKQFYTPKGADHSSVAIR) the chain is on the mitochondrial intermembrane side. The helical transmembrane segment at 117–133 (ILAGCTTGAMAVTCAQP) threads the bilayer. Residues 134-179 (TDVVKVRFQAMIRLGTGGERKYRGTMDAYRTIAREEGVRGLWKGTW) lie on the Mitochondrial matrix side of the membrane. A helical membrane pass occupies residues 180-196 (PNITRNAIVNCAEMVTY). The Mitochondrial intermembrane portion of the chain corresponds to 197–213 (DIIKEKLLESHLFTDNF). A helical transmembrane segment spans residues 214 to 233 (PCHFVSAFGAGFCATVVASP). Residues 234–267 (VDVVKTRYMNAPLGRYRSPLHCMLKMVAQEGPTA) lie on the Mitochondrial matrix side of the membrane. Residues 268 to 290 (FYKGFVPSFLRLGAWNVMMFVTY) form a helical membrane-spanning segment. The interval 275–297 (SFLRLGAWNVMMFVTYEQLKRAL) is purine nucleotide binding. The Mitochondrial intermembrane segment spans residues 291–308 (EQLKRALMKVQVLRESPF).

The protein belongs to the mitochondrial carrier (TC 2.A.29) family. Interacts with HAX1; the interaction is direct and calcium-dependent.

The protein resides in the mitochondrion inner membrane. Its activity is regulated as follows. Inhibited by purine nucleotides and inorganic phosphate (in vitro). Functionally, putative transmembrane transporter that plays a role in mitochondrial metabolism via an as yet unclear mechanism. Originally, this mitochondrial protein was thought to act as a proton transmembrane transporter from the mitochondrial intermembrane space into the matrix, causing proton leaks through the inner mitochondrial membrane, thereby uncoupling mitochondrial membrane potential generation from ATP synthesis. However, this function is controversial and uncoupling may not be the function, or at least not the main function, but rather a consequence of more conventional metabolite transporter activity. This Mus musculus (Mouse) protein is Putative mitochondrial transporter UCP3.